The chain runs to 281 residues: Diaminopimelate epimerase (281 aa).

Substrate-binding residues include N11 and N65. The active-site Proton donor is the C74. Substrate-binding positions include 75 to 76 (GN), N164, N197, and 215 to 216 (ER). C224 functions as the Proton acceptor in the catalytic mechanism. Substrate is bound at residue 225 to 226 (GT).

It belongs to the diaminopimelate epimerase family. As to quaternary structure, homodimer.

Its subcellular location is the cytoplasm. It carries out the reaction (2S,6S)-2,6-diaminopimelate = meso-2,6-diaminopimelate. The protein operates within amino-acid biosynthesis; L-lysine biosynthesis via DAP pathway; DL-2,6-diaminopimelate from LL-2,6-diaminopimelate: step 1/1. In terms of biological role, catalyzes the stereoinversion of LL-2,6-diaminopimelate (L,L-DAP) to meso-diaminopimelate (meso-DAP), a precursor of L-lysine and an essential component of the bacterial peptidoglycan. The sequence is that of Diaminopimelate epimerase from Heliobacterium modesticaldum (strain ATCC 51547 / Ice1).